The primary structure comprises 466 residues: MNIKTRFAPSPTGDLHVGSVRTALYSWLFARKNGGEFILRIEDTDIERSTQQAINAIIDSMKWLKIDWDQGPYFQTQNLDRYKEVINQLLKNGSAYKCYCSKKRLEELRNHQIINGKKPRYDGYCRNFDQTKIKNQPCVVRFRNPQQGYVIFNDLIRGKIKYNNQELDDLIICRTEGIPTYNFCVIIDDLDMKITHVIRGEDHLNNTPRQINILKAIGARVPEYAHLSMIIGHDGKKLSKRHSAVGVMQYRDQGFLPEALLNYLLRLGWSYGNQEIFSLDEMKKLFSLNTVKKSASLFDQQKLLWYNHFYIKTLSTDYIAQHLLFHLKQMGINPYMGPALADIVTLFRTRCKTIKDMASSCLYFYKDFEQFDHQAAIVYLKPVATKKLQTVQAKLTNQTNWTLESIQDILQQTAHELKVSMEAISMPLRVAVTGTSQSPAIDRIIHVIGKSRSLKRIDMALKYINI.

The 'HIGH' region motif lies at 9–19 (PSPTGDLHVGS). A 'KMSKS' region motif is present at residues 237 to 241 (KLSKR). Residue K240 participates in ATP binding.

The protein belongs to the class-I aminoacyl-tRNA synthetase family. Glutamate--tRNA ligase type 1 subfamily. In terms of assembly, monomer.

It is found in the cytoplasm. It carries out the reaction tRNA(Glu) + L-glutamate + ATP = L-glutamyl-tRNA(Glu) + AMP + diphosphate. Catalyzes the attachment of glutamate to tRNA(Glu) in a two-step reaction: glutamate is first activated by ATP to form Glu-AMP and then transferred to the acceptor end of tRNA(Glu). The protein is Glutamate--tRNA ligase of Baumannia cicadellinicola subsp. Homalodisca coagulata.